Consider the following 336-residue polypeptide: Aldo-keto reductase str7 (336 aa).

Asp57 is an NADP(+) binding site. Tyr62 serves as the catalytic Proton donor. His124 contacts substrate. NADP(+) contacts are provided by residues 154–155 (SE), Gln174, 206–220 (SPLGRGLLTGQYKSP), and 283–291 (KKIKYLEEN).

The protein belongs to the aldo/keto reductase family. Aldo/keto reductase 2 subfamily.

Its pathway is mycotoxin biosynthesis. In terms of biological role, aldo-keto reductase; part of the gene cluster that mediates the biosynthesis of strobilurin A, an antifungal polyketide that contains a key beta-methoxyacrylate toxophore that targets the complex III of the mitochondrial electron transport chain. Strobilurin biosynthesis begins with construction of benzoyl CoA by step-wise elimination of ammonia from phenylalanine by the phenylalanine ammonia-lyase str11, oxygenation by str8 and retro-Claisen reaction to form benzoic acid, which is activated to its CoA thiolester benzoyl CoA by the dedicated CoA ligase str10. Benzoyl CoA forms the starter unit for the highly reducing polyketide synthase stpks1 that produces the polyketide prestrobilutin A. The FAD-dependent oxygenase str9 then catalyzes the key oxidative rearrangement responsible for the creation of the beta-methoxyacrylate toxophore. Str9 performs epoxidation of the 2,3 olefin of prestrobilutin A, followed by Meinwald rearrangement to furnish the aldehyde intermediate. Rapid enolization of the aldehyde intermediate would give the beta-methoxyacrylate skeleton and methylations catalyzed by str2 and str3 complete the synthesis and lead to the production of strobilurin A. The short-chain dehydrogenase stl2 and the dehydrogenase str4 play a role in the shunt pathway leading to the production of bolineol. The cluster encodes no obvious halogenase gene that could be involved in production of strobilurin B, nor any obvious dimethylallyl-transferase that could be involved in the production of strobilurin G. It is possible that unknown proteins encoded in, or near, the cluster (such as str1 or stl1) may form new classes of halogenases or dimethylally-transferases, or that the responsible genes are located elsewhere on the genome. Similarly, proteins encoded by str5/str6 hydrolases appear to have no chemical role in the biosynthesis of strobilurin A. Finally, no obvious self-resistance gene is found within the cluster. This is Aldo-keto reductase str7 from Strobilurus tenacellus.